Here is a 330-residue protein sequence, read N- to C-terminus: Spondin-2 (330 aa).

The first 25 residues, 1–25, serve as a signal peptide directing secretion; it reads MENVSFSLDRTLWVFLLAMLGSTAG. The 191-residue stretch at 30–220 folds into the Spondin domain; it reads GESVCTARPL…EITASSPSHP (191 aa). Cys34 and Cys170 are disulfide-bonded. Glu140 lines the a divalent metal cation pocket. The Ca(2+) site is built by Asp159, Asp187, and Asp191. The TSP type-1 domain occupies 276–330; that stretch reads DCEVSLWSSWGLCGGPCGKLGAKSRTRYVRVQPANNGTPCPELEEEAECAPDNCV. A glycan (C-linked (Man) tryptophan) is linked at Trp282.

As to quaternary structure, monomer. Interacts with integrin. In terms of tissue distribution, abundantly expressed in the developing hippocampus.

It is found in the secreted. The protein localises to the extracellular space. Its subcellular location is the extracellular matrix. Cell adhesion protein that promotes adhesion and outgrowth of hippocampal embryonic neurons. Binds directly to bacteria and their components and functions as an opsonin for macrophage phagocytosis of bacteria. Essential in the initiation of the innate immune response and represents a unique pattern-recognition molecule in the ECM for microbial pathogens. This Rattus norvegicus (Rat) protein is Spondin-2 (Spon2).